We begin with the raw amino-acid sequence, 198 residues long: Large ribosomal subunit protein bL25 (198 aa).

This sequence belongs to the bacterial ribosomal protein bL25 family. CTC subfamily. Part of the 50S ribosomal subunit; part of the 5S rRNA/L5/L18/L25 subcomplex. Contacts the 5S rRNA. Binds to the 5S rRNA independently of L5 and L18.

Functionally, this is one of the proteins that binds to the 5S RNA in the ribosome where it forms part of the central protuberance. The chain is Large ribosomal subunit protein bL25 from Phocaeicola vulgatus (strain ATCC 8482 / DSM 1447 / JCM 5826 / CCUG 4940 / NBRC 14291 / NCTC 11154) (Bacteroides vulgatus).